Reading from the N-terminus, the 105-residue chain is Pyrimidine/purine nucleoside phosphorylase (105 aa).

It belongs to the nucleoside phosphorylase PpnP family.

It catalyses the reaction a purine D-ribonucleoside + phosphate = a purine nucleobase + alpha-D-ribose 1-phosphate. The enzyme catalyses adenosine + phosphate = alpha-D-ribose 1-phosphate + adenine. It carries out the reaction cytidine + phosphate = cytosine + alpha-D-ribose 1-phosphate. The catalysed reaction is guanosine + phosphate = alpha-D-ribose 1-phosphate + guanine. It catalyses the reaction inosine + phosphate = alpha-D-ribose 1-phosphate + hypoxanthine. The enzyme catalyses thymidine + phosphate = 2-deoxy-alpha-D-ribose 1-phosphate + thymine. It carries out the reaction uridine + phosphate = alpha-D-ribose 1-phosphate + uracil. The catalysed reaction is xanthosine + phosphate = alpha-D-ribose 1-phosphate + xanthine. In terms of biological role, catalyzes the phosphorolysis of diverse nucleosides, yielding D-ribose 1-phosphate and the respective free bases. Can use uridine, adenosine, guanosine, cytidine, thymidine, inosine and xanthosine as substrates. Also catalyzes the reverse reactions. This Anaeromyxobacter sp. (strain Fw109-5) protein is Pyrimidine/purine nucleoside phosphorylase.